The following is a 278-amino-acid chain: Probable septum site-determining protein MinC (278 aa).

It belongs to the MinC family. As to quaternary structure, interacts with MinD and FtsZ.

In terms of biological role, cell division inhibitor that blocks the formation of polar Z ring septums. Rapidly oscillates between the poles of the cell to destabilize FtsZ filaments that have formed before they mature into polar Z rings. Prevents FtsZ polymerization. This chain is Probable septum site-determining protein MinC, found in Gloeobacter violaceus (strain ATCC 29082 / PCC 7421).